Consider the following 172-residue polypeptide: RNA silencing suppressor p19 (172 aa).

Composition is skewed to basic and acidic residues over residues 1-14 (MERA…REQA) and 150-172 (SERE…EESE). 2 disordered regions span residues 1 to 34 (MERA…KLPD) and 145 to 172 (LQPT…EESE).

It belongs to the tombusvirus protein p19 family. As to quaternary structure, homodimer.

Viral suppressor of RNA silencing which binds specifically to silencing RNAs (siRNAs). Acts as a molecular caliper to specifically select siRNAs based on the length of the duplex region of the RNA. This is RNA silencing suppressor p19 from Cymbidium ringspot virus (CymRSV).